A 607-amino-acid polypeptide reads, in one-letter code: Homologous recombination OB-fold protein (607 aa).

4 disordered regions span residues 25 to 49 (LRPN…SYPA), 84 to 108 (ISSS…SGRQ), 196 to 308 (PWPS…TTVT), and 531 to 581 (LKPP…DDLD). 2 stretches are compositionally biased toward polar residues: residues 27–49 (PNSS…SYPA) and 92–108 (QQRM…SGRQ). A Phosphoserine modification is found at serine 30. Arginine 281 carries the post-translational modification Asymmetric dimethylarginine. The segment covering 295–308 (SPFSTPRSTSTTVT) has biased composition (low complexity). Acidic residues predominate over residues 570 to 581 (PEEELPEADDLD).

Interacts with MCM8; this interaction is necessary for MCM8-MCM9 helicase complex recruitment to DNA damage sites. Interacts with RPA1; this interaction associates HROB with the RPA complex.

The protein resides in the nucleus. The protein localises to the chromosome. In terms of biological role, DNA-binding protein involved in homologous recombination that acts by recruiting the MCM8-MCM9 helicase complex to sites of DNA damage to promote DNA repair synthesis. The chain is Homologous recombination OB-fold protein from Rattus norvegicus (Rat).